We begin with the raw amino-acid sequence, 236 residues long: F-box and leucine-rich protein 22 (236 aa).

Residues 1-46 (MHITQLNRECLLCLFSFLDKDSRRSLSRTCSQLRDVFEDPTLWPLL) enclose the F-box domain. LRR repeat units follow at residues 15–40 (FSFL…FEDP), 43–72 (WPLL…SICW), 98–123 (HESL…TLSG), 124–149 (CGHV…RLEN), 150–175 (CARV…HVDF), and 176–201 (CRNV…AERS).

In terms of assembly, directly interacts with SKP1 and CUL1. Enriched in cardiac muscle (at protein level).

It is found in the cytoplasm. The protein resides in the myofibril. The protein localises to the sarcomere. Its subcellular location is the z line. Its pathway is protein modification; protein ubiquitination. Its function is as follows. Substrate-recognition component of the SCF (SKP1-CUL1-F-box protein)-type E3 ubiquitin ligase complex. Promotes ubiquitination of sarcomeric proteins alpha-actinin-2 (ACTN2) and filamin-C (FLNC). The polypeptide is F-box and leucine-rich protein 22 (Fbxl22) (Mus musculus (Mouse)).